The following is a 252-amino-acid chain: Oil body-associated protein 2A (252 aa).

The interval Met-1–Thr-31 is disordered. Residues Ser-22–Thr-31 are compositionally biased toward low complexity.

This sequence belongs to the OBAP family.

The polypeptide is Oil body-associated protein 2A (Zea mays (Maize)).